The chain runs to 443 residues: Phosphoglucosamine mutase (443 aa).

Catalysis depends on Ser100, which acts as the Phosphoserine intermediate. Residues Ser100, Asp240, Asp242, and Asp244 each contribute to the Mg(2+) site. Ser100 is subject to Phosphoserine.

It belongs to the phosphohexose mutase family. Mg(2+) is required as a cofactor. In terms of processing, activated by phosphorylation.

The enzyme catalyses alpha-D-glucosamine 1-phosphate = D-glucosamine 6-phosphate. In terms of biological role, catalyzes the conversion of glucosamine-6-phosphate to glucosamine-1-phosphate. This chain is Phosphoglucosamine mutase, found in Carboxydothermus hydrogenoformans (strain ATCC BAA-161 / DSM 6008 / Z-2901).